Reading from the N-terminus, the 436-residue chain is Xylose isomerase (436 aa).

Catalysis depends on residues His100 and Asp103. Positions 231, 267, 270, 295, 306, 308, and 338 each coordinate Mg(2+).

This sequence belongs to the xylose isomerase family. As to quaternary structure, homotetramer. Mg(2+) is required as a cofactor.

Its subcellular location is the cytoplasm. It catalyses the reaction alpha-D-xylose = alpha-D-xylulofuranose. The sequence is that of Xylose isomerase from Rhizobium johnstonii (strain DSM 114642 / LMG 32736 / 3841) (Rhizobium leguminosarum bv. viciae).